The primary structure comprises 494 residues: Aspartyl/glutamyl-tRNA(Asn/Gln) amidotransferase subunit B (494 aa).

This sequence belongs to the GatB/GatE family. GatB subfamily. As to quaternary structure, heterotrimer of A, B and C subunits.

It catalyses the reaction L-glutamyl-tRNA(Gln) + L-glutamine + ATP + H2O = L-glutaminyl-tRNA(Gln) + L-glutamate + ADP + phosphate + H(+). The enzyme catalyses L-aspartyl-tRNA(Asn) + L-glutamine + ATP + H2O = L-asparaginyl-tRNA(Asn) + L-glutamate + ADP + phosphate + 2 H(+). Its function is as follows. Allows the formation of correctly charged Asn-tRNA(Asn) or Gln-tRNA(Gln) through the transamidation of misacylated Asp-tRNA(Asn) or Glu-tRNA(Gln) in organisms which lack either or both of asparaginyl-tRNA or glutaminyl-tRNA synthetases. The reaction takes place in the presence of glutamine and ATP through an activated phospho-Asp-tRNA(Asn) or phospho-Glu-tRNA(Gln). In Synechococcus sp. (strain WH7803), this protein is Aspartyl/glutamyl-tRNA(Asn/Gln) amidotransferase subunit B.